The chain runs to 302 residues: MLWFKNILVYRLNKEIALSMDELEQQLASLAFTPCSSQDMTKTGWVSPMGDRGEALIHVAGKQVMMCARKEDKILPATVIKQALQDKVEKLEGEQGRKLKKTEKATLKDEVVHTLLPRAFSKFSQTFIWLDLDKQLVIVDSGSAKRAEDNLALLRKTLGSLPVVPLNFNESVESKMTQWVRSGELPAGFTLMDEAELKAVLEEGGVIRCKKQELVSDEIATHIEAGKFVTKLSLDWEDRLQFMLCDDGSIKRIKFSDTLREQNDDIDKADFAQRFDADFVLMTGELSALIERVIEVLGGEAE.

It belongs to the RdgC family.

Its subcellular location is the cytoplasm. It is found in the nucleoid. May be involved in recombination. This chain is Recombination-associated protein RdgC, found in Proteus mirabilis (strain HI4320).